The chain runs to 515 residues: Anthranilate synthase component 1 (515 aa).

L-tryptophan-binding positions include Ser50 and 281 to 283 (PYM). 316 to 317 (GT) is a chorismate binding site. Glu343 serves as a coordination point for Mg(2+). Residues Tyr431, Arg451, 465–467 (GAG), and Gly467 contribute to the chorismate site. Glu480 provides a ligand contact to Mg(2+).

It belongs to the anthranilate synthase component I family. In terms of assembly, heterotetramer consisting of two non-identical subunits: a beta subunit (TrpG) and a large alpha subunit (TrpE). Mg(2+) serves as cofactor.

It carries out the reaction chorismate + L-glutamine = anthranilate + pyruvate + L-glutamate + H(+). The protein operates within amino-acid biosynthesis; L-tryptophan biosynthesis; L-tryptophan from chorismate: step 1/5. Feedback inhibited by tryptophan. In terms of biological role, part of a heterotetrameric complex that catalyzes the two-step biosynthesis of anthranilate, an intermediate in the biosynthesis of L-tryptophan. In the first step, the glutamine-binding beta subunit (TrpG) of anthranilate synthase (AS) provides the glutamine amidotransferase activity which generates ammonia as a substrate that, along with chorismate, is used in the second step, catalyzed by the large alpha subunit of AS (TrpE) to produce anthranilate. In the absence of TrpG, TrpE can synthesize anthranilate directly from chorismate and high concentrations of ammonia. The protein is Anthranilate synthase component 1 (trpE) of Bacillus subtilis (strain 168).